Consider the following 574-residue polypeptide: Arginine--tRNA ligase (574 aa).

The 'HIGH' region motif lies at 121–131; sequence PNIAKEMHIGH.

It belongs to the class-I aminoacyl-tRNA synthetase family. In terms of assembly, monomer.

It is found in the cytoplasm. It catalyses the reaction tRNA(Arg) + L-arginine + ATP = L-arginyl-tRNA(Arg) + AMP + diphosphate. In Buchnera aphidicola subsp. Acyrthosiphon pisum (strain 5A), this protein is Arginine--tRNA ligase.